The primary structure comprises 426 residues: Spermidine/putrescine import ATP-binding protein PotA (426 aa).

The ABC transporter domain occupies 6-238 (IEFKNVSKTY…PINHFVADFI (233 aa)). 40–47 (GASGSGKS) contributes to the ATP binding site.

This sequence belongs to the ABC transporter superfamily. Spermidine/putrescine importer (TC 3.A.1.11.1) family. The complex is composed of two ATP-binding proteins (PotA), two transmembrane proteins (PotB and PotC) and a solute-binding protein (PotD).

The protein resides in the cell membrane. The enzyme catalyses ATP + H2O + polyamine-[polyamine-binding protein]Side 1 = ADP + phosphate + polyamineSide 2 + [polyamine-binding protein]Side 1.. Its function is as follows. Part of the ABC transporter complex PotABCD involved in spermidine/putrescine import. Responsible for energy coupling to the transport system. This Lactococcus lactis subsp. cremoris (strain SK11) protein is Spermidine/putrescine import ATP-binding protein PotA.